The following is a 1431-amino-acid chain: Probable ATP-dependent RNA helicase spindle-E (1431 aa).

Residues 127–294 (LAAIRENPVV…FAMSSSLPPV (168 aa)) enclose the Helicase ATP-binding domain. 140 to 147 (GETGCGKT) contributes to the ATP binding site. Positions 240-243 (DEVH) match the DEAH box motif. The Helicase C-terminal domain maps to 354–526 (QSQQSYEEAK…NSVLKAKELE (173 aa)). In terms of domain architecture, Tudor spans 937 to 1000 (AKAVTKGLQL…RLMSPQLKRD (64 aa)).

Belongs to the DEAD box helicase family. DEAH subfamily.

Its subcellular location is the cytoplasm. The catalysed reaction is ATP + H2O = ADP + phosphate + H(+). Probable ATP-binding RNA helicase which plays a central role during spermatogenesis and oogenesis by repressing transposable elements and preventing their mobilization, which is essential for the germline integrity. Acts via the piRNA metabolic process, which mediates the repression of transposable elements during meiosis by forming complexes composed of piRNAs and Piwi and govern the methylation and subsequent repression of transposons. Involved in the repression of LTR retrotransposon copia. Also involved in telomere regulation by repressing specialized telomeric retroelements HeT-A, TAHRE, and TART; Drosophila telomeres being maintained by transposition of specialized telomeric retroelements. Involved in telomeric trans-silencing, a repression mechanism by which a transposon or a transgene inserted in subtelomeric heterochromatin has the capacity to repress in trans in the female germline, a homologous transposon, or transgene located in euchromatin. Involved in the repression of testis-expressed Stellate genes by the homologous Su(Ste) repeats. Required for anteroposterior and dorsoventral axis formation during oogenesis. In Drosophila mojavensis (Fruit fly), this protein is Probable ATP-dependent RNA helicase spindle-E (spn-E).